The sequence spans 65 residues: Large ribosomal subunit protein bL33c (65 aa).

The protein belongs to the bacterial ribosomal protein bL33 family.

The protein localises to the plastid. It is found in the chloroplast. The chain is Large ribosomal subunit protein bL33c from Chaetosphaeridium globosum (Charophycean green alga).